The primary structure comprises 272 residues: Large ribosomal subunit protein uL3 (272 aa).

Positions 125 to 146 (QHIGPKSHGGGGGSQPLRQTGS) are disordered.

It belongs to the universal ribosomal protein uL3 family. Part of the 50S ribosomal subunit. Forms a cluster with proteins L14 and L19.

One of the primary rRNA binding proteins, it binds directly near the 3'-end of the 23S rRNA, where it nucleates assembly of the 50S subunit. The chain is Large ribosomal subunit protein uL3 from Metamycoplasma arthritidis (strain 158L3-1) (Mycoplasma arthritidis).